A 146-amino-acid chain; its full sequence is Multiple coagulation factor deficiency protein 2 (146 aa).

A signal peptide spans 1–26; sequence MTMRSLLRTPFLCGLLWAFCAPGARA. Residues 68-103 form the EF-hand 1 domain; sequence SPQELQLHYFKMHDYDGNNLLDGLELSTAITHVHKE. D81, D83, N85, and E92 together coordinate Ca(2+). S106 bears the Phosphoserine mark. Positions 116–146 constitute an EF-hand 2 domain; it reads ELINIIDGVLRDDDKNNDGYIDYAEFAKSLQ. 5 residues coordinate Ca(2+): D129, N131, D133, Y135, and E140.

As to quaternary structure, interacts in a calcium-dependent manner with LMAN1.

Its subcellular location is the endoplasmic reticulum-Golgi intermediate compartment. The protein localises to the endoplasmic reticulum. It is found in the golgi apparatus. In terms of biological role, the MCFD2-LMAN1 complex forms a specific cargo receptor for the ER-to-Golgi transport of selected proteins. Plays a role in the secretion of coagulation factors. The protein is Multiple coagulation factor deficiency protein 2 (MCFD2) of Homo sapiens (Human).